We begin with the raw amino-acid sequence, 288 residues long: Polyamine aminopropyltransferase (288 aa).

A PABS domain is found at Ser9–Met242. Gln36 is a binding site for S-methyl-5'-thioadenosine. The spermidine site is built by His67 and Asp91. Residues Glu111 and Asn143–Gly144 each bind S-methyl-5'-thioadenosine. Asp162 serves as the catalytic Proton acceptor. S-methyl-5'-thioadenosine is bound at residue Pro169.

It belongs to the spermidine/spermine synthase family. As to quaternary structure, homodimer or homotetramer.

Its subcellular location is the cytoplasm. It carries out the reaction S-adenosyl 3-(methylsulfanyl)propylamine + putrescine = S-methyl-5'-thioadenosine + spermidine + H(+). It functions in the pathway amine and polyamine biosynthesis; spermidine biosynthesis; spermidine from putrescine: step 1/1. Functionally, catalyzes the irreversible transfer of a propylamine group from the amino donor S-adenosylmethioninamine (decarboxy-AdoMet) to putrescine (1,4-diaminobutane) to yield spermidine. In Prochlorococcus marinus (strain NATL2A), this protein is Polyamine aminopropyltransferase.